The chain runs to 443 residues: MFLAQEIIRKKRNAEALSKEEIQFFVKGITDNTVSEGQIAALGMAVYFNDMNMDERIALTTSMRDSGTVLDWQSLDLNGPIIDKHSTGGVGDVISLMLGPMAAACGGYVPMISGRGLGHTGGTLDKFDAIPGYQTEPDSALFRKVVKEAGVAIIGQTGDLVPADKRFYSIRDNTATVESISLITASILSKKLAAGLDALAMDVKVGSGAFMPTYEASEELARSITAVANGAGTKTTALLTDMNQVLASCAGNAVEVKEAIDFLTGRYRNPRLYEVTMGLCAEMLMLGGIASTETQAREKLNAVLDNGKAAEIFGRMISGLGGPTDFVENPGLYLPESKIIRPVYAEQTGFATSMDTRELGLAVVTLGGGRRKPGDALDYSVGLTQVCALGDEISKDKPIAMIHAQTETAFAEAERAVRKAIHIGDSRPEKTPEIYRYIRASDL.

Belongs to the thymidine/pyrimidine-nucleoside phosphorylase family. As to quaternary structure, homodimer.

The catalysed reaction is thymidine + phosphate = 2-deoxy-alpha-D-ribose 1-phosphate + thymine. The protein operates within pyrimidine metabolism; dTMP biosynthesis via salvage pathway; dTMP from thymine: step 1/2. Functionally, the enzymes which catalyze the reversible phosphorolysis of pyrimidine nucleosides are involved in the degradation of these compounds and in their utilization as carbon and energy sources, or in the rescue of pyrimidine bases for nucleotide synthesis. This Shewanella woodyi (strain ATCC 51908 / MS32) protein is Thymidine phosphorylase.